The primary structure comprises 2481 residues: Tetratricopeptide repeat protein 28 (2481 aa).

Methionine 1 is modified (N-acetylmethionine). Positions 1-14 (MEQSPPPAPEPTQG) are enriched in pro residues. Residues 1-48 (MEQSPPPAPEPTQGPTPARSRRRREPESPPASAPIPLFGADTIGQRSP) are disordered. The residue at position 28 (serine 28) is a Phosphoserine. TPR repeat units follow at residues 58 to 91 (FVEKVRQSNQACHDGDFHTAIVLYNEALAVDPQN), 93 to 125 (ILYSNRSAAYMKIQQYDKALDDAIKARLLNPKW), 126 to 159 (PKAYFRQGVALQYLGRHADALAAFASGLAQDPKS), 196 to 229 (FVVVSVVGQELLTAGHHGASVVVLEAALKIGTCS), 234 to 267 (GSVFSALSSAYWSLGNTEKSTGYMQQDLDVAKTL), 274 to 307 (CRAHGNLGSAFFSKGNYREALTNHRHQLVLAMKL), 314 to 347 (SSALSSLGHVYTAIGDYPNALASHKQCVLLAKQS), 354 to 387 (ARELGNMGAVYIAMGDFENAVQCHEQHLKIAKDL), 394 to 427 (ARAYSNLGSAYHYRRNFDKAMSYHNYVLELAQEL), 434 to 467 (MRAYAGLGHAARCMQDLERAKQYHEQQLGIAEDL), 474 to 507 (GRASSNLGIIHQMKGDYDTALKLHKTHLCIAQEL), 514 to 547 (GRAYGNMGNAYNALGMYDQAVKYHRQELQISMEV), 554 to 587 (ASTHGNLAVAYQALGAHDRALQHYQNHLNIAREL), 594 to 627 (ARALSNLGNFHCSRGEYVQAAPYYEQYLRLAPDL), 634 to 667 (GKVCHNLGYAHYCLGNYQEAVKYYEQDLALAKDL), 674 to 707 (AKAYCNLGLAFKALLNFSKAEECQKYLLSLAQSL), 714 to 747 (FRALGNLGDIFICKKDINGAIKFYEQQLGLAHQV), 754 to 787 (ASAYAALGTAYRMIQKYDKALGYHTQELEVYQEL), 794 to 827 (CRAHGHLAAVYMALGKYTMAFKCYEEQLDLGQKL), 834 to 867 (AQVYGNMGITKMNMNVMEEAIGYFEQQLAMLQQL), 877 to 910 (GRAYGNLGDCYEALGDYEEAIKYYEQYLSVAQSL), 917 to 950 (AKAYRGLGNGHRAMGSLQQALVCFEKRLVVAHEL), 957 to 990 (AQAYGELGSLHSQLGNYEQAISCLERQLNIARDM), 997 to 1030 (SDAACGLGGVYQQMGEYDTALQYHQLDLQIAEET), 1037 to 1070 (GRAYGNLGLTYESLGTFERAVVYQEQHLSIAAQM), 1077 to 1110 (TVSYSSLGRTHHALQNYSQAVMYLQEGLRLAEQL), 1117 to 1150 (AKIRHGLGLSLWASGNLEEAQHQLYRASALFETI), and 1169 to 1202 (TSSYQALQRVLVSLGHHDEALAVAERGRTRAFAD). Position 1590 is a phosphoserine (serine 1590). Disordered stretches follow at residues 2004–2055 (FVSK…DEEE), 2075–2161 (NTCF…DPQE), and 2176–2339 (AVER…PADA). Polar residues-rich tracts occupy residues 2029–2043 (AYLQRSTLPRSQLPP) and 2096–2122 (SVSSKGSISTPNSPVKMTLIPSPNSPF). The residue at position 2104 (serine 2104) is a Phosphoserine. Residues 2130–2146 (SSDTGESDQSSTETDST) show a composition bias toward low complexity. Residues 2149 to 2159 (SQEESNPKLDP) show a composition bias toward basic and acidic residues. A compositionally biased stretch (polar residues) spans 2183 to 2214 (SGGQVSKSNNPEDGVQAPSSTAVFRASETSAF). Serine 2224 and serine 2251 each carry phosphoserine. Positions 2238–2282 (RSSSLPKVSSGYSSPTTSEMSIKDSPSQHSGRPSPGCDSQTSQLD) are enriched in polar residues. Low complexity predominate over residues 2307-2339 (SPSSGHQSPAGSAPSPALSYSSAGSARSSPADA). 2 positions are modified to phosphoserine: serine 2393 and serine 2398. The disordered stretch occupies residues 2420 to 2467 (QHDGAPPKAPPNGHWRTETTSLGSLPLPAGPPATAPARPLRLPSGNGY).

In terms of assembly, interacts with AURKB. Widely expressed in fetal tissues. In adult tissues, expressed in testis and ovary and, at much lower levels, in kidney and pancreas.

It is found in the cytoplasm. Its subcellular location is the cytoskeleton. It localises to the microtubule organizing center. The protein localises to the centrosome. The protein resides in the spindle. It is found in the spindle pole. Its subcellular location is the midbody. Its function is as follows. During mitosis, may be involved in the condensation of spindle midzone microtubules, leading to the formation of midbody. The protein is Tetratricopeptide repeat protein 28 (TTC28) of Homo sapiens (Human).